Consider the following 416-residue polypeptide: Gamma-glutamyl phosphate reductase (416 aa).

The protein belongs to the gamma-glutamyl phosphate reductase family.

It localises to the cytoplasm. The catalysed reaction is L-glutamate 5-semialdehyde + phosphate + NADP(+) = L-glutamyl 5-phosphate + NADPH + H(+). It participates in amino-acid biosynthesis; L-proline biosynthesis; L-glutamate 5-semialdehyde from L-glutamate: step 2/2. Functionally, catalyzes the NADPH-dependent reduction of L-glutamate 5-phosphate into L-glutamate 5-semialdehyde and phosphate. The product spontaneously undergoes cyclization to form 1-pyrroline-5-carboxylate. This is Gamma-glutamyl phosphate reductase from Streptococcus thermophilus (strain CNRZ 1066).